The sequence spans 979 residues: Translation initiation factor IF-2 (979 aa).

Positions 33–391 (VKSHSSTITT…TPPAEITLTE (359 aa)) are disordered. Low complexity-rich tracts occupy residues 54 to 63 (QKRPQAPKAQ) and 139 to 150 (AKTTSPKAEPAA). Residues 151–166 (PAAPKPKLMGPPPRPT) are compositionally biased toward pro residues. Residues 234–252 (PELDEEPDTNNVEGDDDAT) show a composition bias toward acidic residues. Composition is skewed to basic residues over residues 263 to 278 (PAAKPKKAIGPKPSKR) and 294 to 303 (TKTSKLKRRP). The segment covering 314–328 (GTTTNNNAEVPSVSL) has biased composition (polar residues). Over residues 371–380 (KEQRRDRPDV) the composition is skewed to basic and acidic residues. Positions 468–641 (HRPPVVTIMG…LLVSEIEELS (174 aa)) constitute a tr-type G domain. The G1 stretch occupies residues 477 to 484 (GHVDHGKT). 477–484 (GHVDHGKT) is a binding site for GTP. The G2 stretch occupies residues 502–506 (GITQH). The segment at 527–530 (DTPG) is G3. GTP contacts are provided by residues 527-531 (DTPGH) and 581-584 (NKMD). Positions 581-584 (NKMD) are G4. The tract at residues 617 to 619 (SAL) is G5.

The protein belongs to the TRAFAC class translation factor GTPase superfamily. Classic translation factor GTPase family. IF-2 subfamily.

It is found in the cytoplasm. One of the essential components for the initiation of protein synthesis. Protects formylmethionyl-tRNA from spontaneous hydrolysis and promotes its binding to the 30S ribosomal subunits. Also involved in the hydrolysis of GTP during the formation of the 70S ribosomal complex. The polypeptide is Translation initiation factor IF-2 (Picosynechococcus sp. (strain ATCC 27264 / PCC 7002 / PR-6) (Agmenellum quadruplicatum)).